A 76-amino-acid chain; its full sequence is Serine proteinase inhibitor IA-1 (76 aa).

At serine 1 the chain carries N-acetylserine.

Belongs to the protease inhibitor I9 family.

Its function is as follows. Specifically inhibits an endogenous intracellular serine proteinase (proteinase A). This Pleurotus ostreatus (Oyster mushroom) protein is Serine proteinase inhibitor IA-1.